The primary structure comprises 568 residues: MSTEASVASKWTRPDDFIKLQRLKQKKNKLAARVSNNNNRRPRHQVDETDKSKLLEAKLAQKRKNPFAKSTADAKKLRVDPQLADLEPVVTASSCFVRETPTRPAPAKFVLQKYDPQAFAKLFQHPQINAEDEDDAELAARQKHTAHLPVDWSLKTRARFFCPTELPAIQLKTSQLASGLTSFVRCMDPQRTESTLDISDATRFNQCNYYWQHPHLPWLTLYPRTAKENVGVVVGERERKALAEEWDFSFRGLFQLLRARQCPYFYLCANTFTVLFRAAGVGGRPESHALVTPSTRGMRQALRQEGIEFSMPLKSDNSGNAHDNSFNEESTTTSLGPEAGEDAPPPAQEDEDDDEDWLESLGVDERELRRIQSSHARKQQAAEMREDFSDNSLLLVDGVECQGFFSYLLNAKSAISTVGRLAGVPPTLLSPVAFPKATMQHLVPRSKKVRLDGVDYFSIDIKGLILPTFLPSVAELLSETRQMFSSTLASSINTLAFSKATQKLLETPETPQSDAEGEDAAGQVFGEQNLSECGLLPAVVGSICRTGQHAVGLLERVCYQRDEGYAWS.

Disordered stretches follow at residues Asn28–Glu48 and Met311–Glu355. Residues Ser315–Leu335 show a composition bias toward polar residues.

It belongs to the DONSON family. As to expression, expression peaks during late G1 and S phase (at protein level).

It is found in the nucleus. Essential for DNA amplification in the ovary and required for cell proliferation during development. This is Protein downstream neighbor of son homolog (hd) from Drosophila melanogaster (Fruit fly).